The sequence spans 479 residues: GTPase Der (479 aa).

EngA-type G domains lie at P3 to Y166 and L192 to T365. Residues G9 to S16, D56 to I60, N118 to D121, G198 to S205, D245 to V249, and N310 to D313 contribute to the GTP site. Residues Q366–V450 enclose the KH-like domain.

The protein belongs to the TRAFAC class TrmE-Era-EngA-EngB-Septin-like GTPase superfamily. EngA (Der) GTPase family. In terms of assembly, associates with the 50S ribosomal subunit.

In terms of biological role, GTPase that plays an essential role in the late steps of ribosome biogenesis. This chain is GTPase Der, found in Idiomarina loihiensis (strain ATCC BAA-735 / DSM 15497 / L2-TR).